Reading from the N-terminus, the 219-residue chain is Uracil-DNA glycosylase (219 aa).

Aspartate 64 (proton acceptor) is an active-site residue.

It belongs to the uracil-DNA glycosylase (UDG) superfamily. UNG family.

The protein localises to the cytoplasm. The enzyme catalyses Hydrolyzes single-stranded DNA or mismatched double-stranded DNA and polynucleotides, releasing free uracil.. Excises uracil residues from the DNA which can arise as a result of misincorporation of dUMP residues by DNA polymerase or due to deamination of cytosine. The chain is Uracil-DNA glycosylase from Leuconostoc citreum (strain KM20).